We begin with the raw amino-acid sequence, 938 residues long: Scm-like with four MBT domains protein 2 (938 aa).

Residues 1–32 (MERYLPVSKKRNSSSSLEKITGSANGNGTLYS) are disordered. Positions 13–30 (SSSSLEKITGSANGNGTL) are enriched in polar residues. MBT repeat units lie at residues 43–143 (FSWG…LRPP), 151–255 (SDWT…MDPP), 265–371 (FEWK…LAPP), and 379–475 (FNWV…LTTP). Residues 742-836 (PEGIPESLPE…TVPTTASSNN (95 aa)) are disordered. 2 stretches are compositionally biased toward basic and acidic residues: residues 765-777 (TEQE…DTAR) and 809-822 (RNSE…VERA). An SAM domain is found at 868-931 (WSVTDVVRFI…CHQIERVKVA (64 aa)).

In terms of assembly, interacts with YY1. Interacts with methylated histones H3K9me2 and H4K20me2. As to expression, expressed in testis and, at much lower levels, in ovary.

The protein localises to the nucleus. In terms of biological role, transcriptional repressor of HOXB13 gene. This chain is Scm-like with four MBT domains protein 2 (Sfmbt2), found in Mus musculus (Mouse).